The primary structure comprises 301 residues: Aspartate carbamoyltransferase catalytic subunit (301 aa).

The carbamoyl phosphate site is built by R54 and T55. K82 lines the L-aspartate pocket. Residues R104, H132, and Q135 each contribute to the carbamoyl phosphate site. R165 and R217 together coordinate L-aspartate. Carbamoyl phosphate is bound by residues G257 and P258.

It belongs to the aspartate/ornithine carbamoyltransferase superfamily. ATCase family. In terms of assembly, heterododecamer (2C3:3R2) of six catalytic PyrB chains organized as two trimers (C3), and six regulatory PyrI chains organized as three dimers (R2).

The enzyme catalyses carbamoyl phosphate + L-aspartate = N-carbamoyl-L-aspartate + phosphate + H(+). It participates in pyrimidine metabolism; UMP biosynthesis via de novo pathway; (S)-dihydroorotate from bicarbonate: step 2/3. Catalyzes the condensation of carbamoyl phosphate and aspartate to form carbamoyl aspartate and inorganic phosphate, the committed step in the de novo pyrimidine nucleotide biosynthesis pathway. The sequence is that of Aspartate carbamoyltransferase catalytic subunit from Thermus aquaticus.